The chain runs to 481 residues: MQFHGYEDLRSRLLSGELTCEQVISDYLQRIDSSRDDNIFTVVFHDEAMARARELDSKLQRGEAPGVLFGMPIAIKDNIAMKGAPLSCASKILAGYESVYDATVIKRMQAEDAIFVGRTNMDEFAMGSSNENSAIGPVPNPYDKTRVPGGSSGGSAAAVANDLAMVALGSDTGGSVRQPAGFCNIIGLKPTYGRISRYGLVAFASSFDQIGLLAANCDDAALVLGVIAGKDEHDATSSHHDVPEYDTAMDHVSVDGLRIGVPRAFFPESLNADVAGVVKAGLKKLEEAGAELVEIDLPESDYAIAAYYILVTAEASSNLARFDGARYGYRSPDSPDLSSMYVNSRTEGFGAEVKRRIMLGTYVLSAGYYDTYYKKAQQVRRVFQDKYREAFEKVDVIFGPTSPFPPFGIGDKMDNPLEMYLADVFTVPASIVGMPAISVPVGFDSLGLPVGAHLICNFFEEGKMLGIARHLQTLCQTAPSN.

Residues Lys76 and Ser151 each act as charge relay system in the active site. Ser175 functions as the Acyl-ester intermediate in the catalytic mechanism.

The protein belongs to the amidase family. GatA subfamily. As to quaternary structure, heterotrimer of A, B and C subunits.

It carries out the reaction L-glutamyl-tRNA(Gln) + L-glutamine + ATP + H2O = L-glutaminyl-tRNA(Gln) + L-glutamate + ADP + phosphate + H(+). Allows the formation of correctly charged Gln-tRNA(Gln) through the transamidation of misacylated Glu-tRNA(Gln) in organisms which lack glutaminyl-tRNA synthetase. The reaction takes place in the presence of glutamine and ATP through an activated gamma-phospho-Glu-tRNA(Gln). The protein is Glutamyl-tRNA(Gln) amidotransferase subunit A of Chlorobaculum tepidum (strain ATCC 49652 / DSM 12025 / NBRC 103806 / TLS) (Chlorobium tepidum).